The following is a 79-amino-acid chain: Antimicrobial peptide UyCT1 (79 aa).

The first 23 residues, 1–23 (MKTQLAFLAITVILMQLFAQTEA), serve as a signal peptide directing secretion. Isoleucine amide is present on I37. Positions 41–79 (GLRNVDQIADLFDSGLSDADDLFDSGLSDADAKFMKMFM) are excised as a propeptide.

Belongs to the non-disulfide-bridged peptide (NDBP) superfamily. Short antimicrobial peptide (group 4) family. As to expression, expressed by the venom gland.

The protein resides in the secreted. Its subcellular location is the target cell membrane. In terms of biological role, inhibits the growth of Gram-positive (S.aureus, MIC=15 uM) and Gram-negative bacteria (E.coli, MIC=10 uM and P.aeruginosa, MIC=10 uM). It also shows 26% of hemolysis when 15 uM are tested (81% at 50 uM). Functionally, inhibits the growth of Gram-negative bacteria (E.coli, MIC=25 uM and P.aeruginosa, MIC=40 uM). It also shows 7% of hemolysis when 50 uM are tested. Does not show activity against the Gram-positive bacteria S.aureus. The polypeptide is Antimicrobial peptide UyCT1 (Urodacus yaschenkoi (Inland robust scorpion)).